Reading from the N-terminus, the 260-residue chain is UPF0246 protein BTH_I1090 (260 aa).

This sequence belongs to the UPF0246 family.

This Burkholderia thailandensis (strain ATCC 700388 / DSM 13276 / CCUG 48851 / CIP 106301 / E264) protein is UPF0246 protein BTH_I1090.